Reading from the N-terminus, the 207-residue chain is Protein GrpE (207 aa).

A disordered region spans residues 1 to 33; sequence MTDPNGPKDIPEQSAEAAEPVVSKPYIMPDDPE.

This sequence belongs to the GrpE family. Homodimer.

Its subcellular location is the cytoplasm. In terms of biological role, participates actively in the response to hyperosmotic and heat shock by preventing the aggregation of stress-denatured proteins, in association with DnaK and GrpE. It is the nucleotide exchange factor for DnaK and may function as a thermosensor. Unfolded proteins bind initially to DnaJ; upon interaction with the DnaJ-bound protein, DnaK hydrolyzes its bound ATP, resulting in the formation of a stable complex. GrpE releases ADP from DnaK; ATP binding to DnaK triggers the release of the substrate protein, thus completing the reaction cycle. Several rounds of ATP-dependent interactions between DnaJ, DnaK and GrpE are required for fully efficient folding. The chain is Protein GrpE from Rhodopseudomonas palustris (strain BisA53).